We begin with the raw amino-acid sequence, 212 residues long: MRLKSSRLGYLFLQFMTLCFYTQMTMQSISMPNFKHHVTEQSRLSDRMSRRLTRTYQLYSRTSGKHVQVLGNKRVNANAEDGDIHAKLVVETDTFGSRVRIRGAKTGYYICMNKKGKLIGRRKGRGKDCIFTEIVLENNYTALQNAKYKGWYMAFTRKGRPRKAMQTRQHQREAHFMKRLPRGHLLTEQKPFDLIPYPLNKRTKHHQRASVN.

The N-terminal stretch at 1–27 (MRLKSSRLGYLFLQFMTLCFYTQMTMQ) is a signal peptide. Asparagine 139 carries N-linked (GlcNAc...) asparagine glycosylation.

The protein belongs to the heparin-binding growth factors family.

The protein localises to the secreted. Its function is as follows. May act as signaling molecule during development of the midbrain-hindbrain boundary (MHB) organizer, and be involved in patterning of the nervous system. The polypeptide is Fibroblast growth factor 8b (fgf8b) (Danio rerio (Zebrafish)).